A 431-amino-acid polypeptide reads, in one-letter code: Argininosuccinate lyase (431 aa).

The protein belongs to the lyase 1 family. Argininosuccinate lyase subfamily.

It is found in the cytoplasm. It carries out the reaction 2-(N(omega)-L-arginino)succinate = fumarate + L-arginine. It participates in amino-acid biosynthesis; L-arginine biosynthesis; L-arginine from L-ornithine and carbamoyl phosphate: step 3/3. The polypeptide is Argininosuccinate lyase (Xanthomonas campestris pv. campestris (strain B100)).